The chain runs to 150 residues: UPF0336 protein SAV_4901 (150 aa).

Residues 8-126 (VGRSYPPTDP…GNDVVDVRGE (119 aa)) enclose the MaoC-like domain.

The protein belongs to the UPF0336 family.

The polypeptide is UPF0336 protein SAV_4901 (Streptomyces avermitilis (strain ATCC 31267 / DSM 46492 / JCM 5070 / NBRC 14893 / NCIMB 12804 / NRRL 8165 / MA-4680)).